A 423-amino-acid chain; its full sequence is Glutamyl-tRNA reductase (423 aa).

Substrate is bound by residues 49–52, serine 109, 114–116, and glutamine 120; these read TCNR and EGQ. Cysteine 50 acts as the Nucleophile in catalysis. Position 189-194 (189-194) interacts with NADP(+); the sequence is GAGETG.

Belongs to the glutamyl-tRNA reductase family. As to quaternary structure, homodimer.

The catalysed reaction is (S)-4-amino-5-oxopentanoate + tRNA(Glu) + NADP(+) = L-glutamyl-tRNA(Glu) + NADPH + H(+). It functions in the pathway porphyrin-containing compound metabolism; protoporphyrin-IX biosynthesis; 5-aminolevulinate from L-glutamyl-tRNA(Glu): step 1/2. The protein operates within porphyrin-containing compound metabolism; chlorophyll biosynthesis. In terms of biological role, catalyzes the NADPH-dependent reduction of glutamyl-tRNA(Glu) to glutamate 1-semialdehyde (GSA). The polypeptide is Glutamyl-tRNA reductase (Chlorobium limicola (strain DSM 245 / NBRC 103803 / 6330)).